The primary structure comprises 626 residues: Ankyrin repeat domain-containing protein 55 (626 aa).

ANK repeat units lie at residues 25-54, 59-88, 92-124, 125-156, 160-189, 193-222, 229-259, 263-292, and 296-325; these read VDLA…SILE, EGCT…NINT, YGRT…IPDK, NGRL…EINH, EGMT…DPTL, DFKT…GPSI, SGKT…NLQA, DDRT…DSNL, and NEST…AEPA. Positions 354–372 are enriched in basic and acidic residues; that stretch reads KEEQKAHQKDQSRARPKEE. Disordered stretches follow at residues 354–377, 455–491, and 522–626; these read KEEQ…TSEV, HAGL…SLEN, and QPGH…HDEN. Residue Ser-474 is modified to Phosphoserine. Positions 604-614 are enriched in basic and acidic residues; that stretch reads QRGHDPPRAEE. Positions 616 to 626 are enriched in polar residues; the sequence is GGSSSPTHDEN.

This chain is Ankyrin repeat domain-containing protein 55 (Ankrd55), found in Mus musculus (Mouse).